We begin with the raw amino-acid sequence, 193 residues long: 7-methyl-GTP pyrophosphatase (193 aa).

Catalysis depends on aspartate 68, which acts as the Proton acceptor.

The protein belongs to the Maf family. YceF subfamily. Requires a divalent metal cation as cofactor.

The protein resides in the cytoplasm. The catalysed reaction is N(7)-methyl-GTP + H2O = N(7)-methyl-GMP + diphosphate + H(+). In terms of biological role, nucleoside triphosphate pyrophosphatase that hydrolyzes 7-methyl-GTP (m(7)GTP). May have a dual role in cell division arrest and in preventing the incorporation of modified nucleotides into cellular nucleic acids. The protein is 7-methyl-GTP pyrophosphatase of Chromobacterium violaceum (strain ATCC 12472 / DSM 30191 / JCM 1249 / CCUG 213 / NBRC 12614 / NCIMB 9131 / NCTC 9757 / MK).